The primary structure comprises 532 residues: 56 kDa type-specific antigen (532 aa).

The signal sequence occupies residues 1–22 (MKKIMLIASAMSALSLPFSASA). The helical transmembrane segment at 67–87 (TNGLPFGGTLAAGMTIAPGFR) threads the bilayer. The interval 401-428 (QEEDAKNQGEGDCKQQQGTSEKSKKGKD) is disordered. Over residues 403–413 (EDAKNQGEGDC) the composition is skewed to basic and acidic residues. Residues 480–500 (TGMVASGALGVAINAAEGVYV) form a helical membrane-spanning segment.

Its subcellular location is the cell membrane. In terms of biological role, may be an adherent factor for rickettsial adsorption to the host-cell surface and a determinant of virulence of individual rickettsial strain. It is the major outer membrane protein. In Orientia tsutsugamushi (Rickettsia tsutsugamushi), this protein is 56 kDa type-specific antigen.